A 181-amino-acid chain; its full sequence is Isopentenyl-diphosphate Delta-isomerase (181 aa).

2 residues coordinate Mn(2+): His25 and His32. Residues Pro30–Met164 form the Nudix hydrolase domain. The active site involves Cys67. A Mg(2+)-binding site is contributed by Cys67. A Mn(2+)-binding site is contributed by His69. Position 87 (Glu87) interacts with Mg(2+). Positions 114 and 116 each coordinate Mn(2+). Glu116 is an active-site residue.

It belongs to the IPP isomerase type 1 family. In terms of assembly, homodimer. Mg(2+) serves as cofactor. The cofactor is Mn(2+).

The protein resides in the cytoplasm. The catalysed reaction is isopentenyl diphosphate = dimethylallyl diphosphate. The protein operates within isoprenoid biosynthesis; dimethylallyl diphosphate biosynthesis; dimethylallyl diphosphate from isopentenyl diphosphate: step 1/1. Functionally, catalyzes the 1,3-allylic rearrangement of the homoallylic substrate isopentenyl (IPP) to its highly electrophilic allylic isomer, dimethylallyl diphosphate (DMAPP). The protein is Isopentenyl-diphosphate Delta-isomerase of Salmonella typhi.